Reading from the N-terminus, the 319-residue chain is MNHLSEKVISLKGRDLLTLLDYTPEEVQQLLTQALELKQKAKNGEPTPYLTGKSLGMIFENASTRTRVSFEVGMTQLGGHALFLSPKDLQIGRGEPIKDTANVLSRYVDAIMIRTNSHESVEELAHYATVPVINALTDAYHPCQALADALTILEKKETLIGKKLAYIGDGNNVCHSLLAIGAKTGMDVTVATPKGYEVDQEIFQRATEAAKETGATLVQTTNPQVAAENADAIYTDVWASMGYEAEQSEREEVFQPYQVNDQLLTLAKKDVSFLHCLPAHRGEEVTASVIDGPHSAIYDQAENRLHAQKAVLTALLIGE.

Carbamoyl phosphate-binding positions include 63 to 66, Gln-90, Arg-114, and 141 to 144; these read STRT and HPCQ. Residues Asn-172, Asp-236, and 240 to 241 each bind L-ornithine; that span reads SM. Carbamoyl phosphate-binding positions include 276–277 and Arg-304; that span reads CL.

This sequence belongs to the aspartate/ornithine carbamoyltransferase superfamily. OTCase family.

The protein resides in the cytoplasm. The catalysed reaction is carbamoyl phosphate + L-ornithine = L-citrulline + phosphate + H(+). The protein operates within amino-acid biosynthesis; L-arginine biosynthesis; L-arginine from L-ornithine and carbamoyl phosphate: step 1/3. Functionally, reversibly catalyzes the transfer of the carbamoyl group from carbamoyl phosphate (CP) to the N(epsilon) atom of ornithine (ORN) to produce L-citrulline. This is Ornithine carbamoyltransferase from Halalkalibacterium halodurans (strain ATCC BAA-125 / DSM 18197 / FERM 7344 / JCM 9153 / C-125) (Bacillus halodurans).